A 112-amino-acid polypeptide reads, in one-letter code: Protein Churchill (112 aa).

Residues cysteine 2, cysteine 5, cysteine 30, cysteine 33, histidine 59, cysteine 61, cysteine 64, histidine 66, histidine 71, cysteine 88, and cysteine 91 each coordinate Zn(2+).

This sequence belongs to the Churchill family.

In terms of biological role, transcriptional activator that mediates FGF signaling during neural development. Plays a role in the regulation of cell movement. Does not bind DNA by itself. This is Protein Churchill (CHURC1) from Bos taurus (Bovine).